Consider the following 266-residue polypeptide: GRIP and coiled-coil domain-containing protein C365.11 (266 aa).

Over residues 1 to 13 (METTVSAKNSLEN) the composition is skewed to polar residues. A disordered region spans residues 1–88 (METTVSAKNS…LDEKVKELEN (88 aa)). Position 10 is a phosphoserine (S10). Residues 36–49 (ASKKKRKNRKKKKN) show a composition bias toward basic residues. The segment covering 63–88 (EEQRSGSIDSKDKEKPLDEKVKELEN) has biased composition (basic and acidic residues). Residues 73-188 (KDKEKPLDEK…ESVKSHESEL (116 aa)) adopt a coiled-coil conformation. Phosphoserine occurs at positions 202 and 204. One can recognise a GRIP domain in the interval 216–264 (ISKELINKEYARNVLLQFLENHEHRDKILPILSTALDLEEVHQHLILKN).

The protein localises to the cytoplasm. The protein is GRIP and coiled-coil domain-containing protein C365.11 of Schizosaccharomyces pombe (strain 972 / ATCC 24843) (Fission yeast).